The following is a 390-amino-acid chain: Flap endonuclease 1-1 (390 aa).

The tract at residues 1 to 108 (MGIHQLMQFL…GELARRKKLK (108 aa)) is N-domain. Asp34 contributes to the Mg(2+) binding site. Arg74 is a DNA binding site. Mg(2+) is bound by residues Asp90, Glu162, Glu164, Asp183, and Asp185. Residues 126 to 254 (QALLQHQRTT…GTAYKLIKEF (129 aa)) form an I-domain region. A DNA-binding site is contributed by Glu162. DNA contacts are provided by Gly232 and Asp234. Asp234 is a Mg(2+) binding site. Positions 348 to 356 (FQSRLENFF) are interaction with PCNA. The interval 359-390 (TTKIIHPNNSKAKGKANKKNEQTQKSGGKKKI) is disordered.

Belongs to the XPG/RAD2 endonuclease family. FEN1 subfamily. As to quaternary structure, interacts with PCNA. Three molecules of FEN1 bind to one PCNA trimer with each molecule binding to one PCNA monomer. PCNA stimulates the nuclease activity without altering cleavage specificity. Mg(2+) is required as a cofactor. Post-translationally, phosphorylated. Phosphorylation upon DNA damage induces relocalization to the nuclear plasma.

Its subcellular location is the nucleus. It is found in the nucleolus. The protein localises to the nucleoplasm. The protein resides in the mitochondrion. Structure-specific nuclease with 5'-flap endonuclease and 5'-3' exonuclease activities involved in DNA replication and repair. During DNA replication, cleaves the 5'-overhanging flap structure that is generated by displacement synthesis when DNA polymerase encounters the 5'-end of a downstream Okazaki fragment. It enters the flap from the 5'-end and then tracks to cleave the flap base, leaving a nick for ligation. Also involved in the long patch base excision repair (LP-BER) pathway, by cleaving within the apurinic/apyrimidinic (AP) site-terminated flap. Acts as a genome stabilization factor that prevents flaps from equilibrating into structures that lead to duplications and deletions. Also possesses 5'-3' exonuclease activity on nicked or gapped double-stranded DNA, and exhibits RNase H activity. Also involved in replication and repair of rDNA and in repairing mitochondrial DNA. This chain is Flap endonuclease 1-1, found in Paramecium tetraurelia.